A 475-amino-acid polypeptide reads, in one-letter code: Putative aldehyde dehydrogenase (475 aa).

NAD(+) is bound by residues 146 to 147 (WN) and 223 to 224 (GS). E245 acts as the Proton acceptor in catalysis. L246 is a binding site for NAD(+). The Nucleophile role is filled by C279. E379 lines the NAD(+) pocket.

The protein belongs to the aldehyde dehydrogenase family.

The catalysed reaction is an aldehyde + NAD(+) + H2O = a carboxylate + NADH + 2 H(+). The polypeptide is Putative aldehyde dehydrogenase (Staphylococcus aureus (strain MSSA476)).